The primary structure comprises 396 residues: NADH-quinone oxidoreductase subunit D (396 aa).

It belongs to the complex I 49 kDa subunit family. In terms of assembly, NDH-1 is composed of 14 different subunits. Subunits NuoB, C, D, E, F, and G constitute the peripheral sector of the complex.

It localises to the cell inner membrane. It catalyses the reaction a quinone + NADH + 5 H(+)(in) = a quinol + NAD(+) + 4 H(+)(out). Its function is as follows. NDH-1 shuttles electrons from NADH, via FMN and iron-sulfur (Fe-S) centers, to quinones in the respiratory chain. The immediate electron acceptor for the enzyme in this species is believed to be ubiquinone. Couples the redox reaction to proton translocation (for every two electrons transferred, four hydrogen ions are translocated across the cytoplasmic membrane), and thus conserves the redox energy in a proton gradient. The polypeptide is NADH-quinone oxidoreductase subunit D (Brucella melitensis biotype 1 (strain ATCC 23456 / CCUG 17765 / NCTC 10094 / 16M)).